A 125-amino-acid chain; its full sequence is Small ribosomal subunit protein uS12 (125 aa).

Positions 1–31 (MPTINQLVRQGREVETTKSKSPAMQNSPQRR) are disordered. Polar residues predominate over residues 19 to 29 (SKSPAMQNSPQ). Position 89 is a 3-methylthioaspartic acid (Asp89).

The protein belongs to the universal ribosomal protein uS12 family. As to quaternary structure, part of the 30S ribosomal subunit. Contacts proteins S8 and S17. May interact with IF1 in the 30S initiation complex.

Functionally, with S4 and S5 plays an important role in translational accuracy. Interacts with and stabilizes bases of the 16S rRNA that are involved in tRNA selection in the A site and with the mRNA backbone. Located at the interface of the 30S and 50S subunits, it traverses the body of the 30S subunit contacting proteins on the other side and probably holding the rRNA structure together. The combined cluster of proteins S8, S12 and S17 appears to hold together the shoulder and platform of the 30S subunit. The sequence is that of Small ribosomal subunit protein uS12 from Paracidovorax citrulli (strain AAC00-1) (Acidovorax citrulli).